Consider the following 743-residue polypeptide: MEAVAVAAAVGVLLLAGAGGAAGDEAREAAAVRALVARLLGPGPAADFSVSVERALAAKPGLDTYSLGGGGAARVRVRGSTGVAAAAGLHRYLRDFCGCHVAWSGSQLRLPRPLPAVPGELTEATPNRYRYYQNVCTQSYSFVWWDWARWEREIDWMALNGINLALAWSGQEAIWQRVYLALGLTQAEINEFFTGPAFLAWGRMGNLHTWDGPLPPSWHIKQLYLQHRVLDQMRSFGMTPVLPAFAGHVPEAVTRVFPQVNVTKMGSWGHFNCSYSCSFLLAPEDPIFPIIGSLFLRELIKEFGTDHIYGADTFNEMQPPSSEPSYLAAATTAVYEAMTAVDTEAVWLLQGWLFQHQPQFWGPAQIRAVLGAVPRGRLLVLDLFAESQPVYTRTASFQGQPFIWCMLHNFGGNHGLFGALEAVNGGPEAARLFPNSTMVGTGMAPEGISQNEVVYSLMAELGWRKDPVPDLAAWVTSFAARRYGVSHPDAGAAWRLLLRSVYNCSGEACRGHNRSPLVRRPSLQMNTSIWYNRSDVFEAWRLLLTSAPSLATSPAFRYDLLDLTRQAVQELVSLYYEEARSAYLSKELASLLRAGGVLAYELLPALDEVLASDSRFLLGSWLEQARAAAVSEAEADFYEQNSRYQLTLWGPEGNILDYANKQLAGLVANYYTPRWRLFLEALVDSVAQGIPFQQHQFDKNVFQLEQAFVLSKQRYPSQPRGDTVDLAKKIFLKYYPRWVAGSW.

The N-terminal stretch at 1–23 (MEAVAVAAAVGVLLLAGAGGAAG) is a signal peptide. N-linked (GlcNAc...) asparagine glycosylation is found at N261, N272, N435, N503, N526, and N532.

It belongs to the glycosyl hydrolase 89 family. As to quaternary structure, monomer and homodimer. In terms of tissue distribution, liver, ovary, peripheral blood leukocytes, testis, prostate, spleen, colon, lung, placenta and kidney.

It localises to the lysosome. The catalysed reaction is Hydrolysis of terminal non-reducing N-acetyl-D-glucosamine residues in N-acetyl-alpha-D-glucosaminides.. Its function is as follows. Involved in the degradation of heparan sulfate. This chain is Alpha-N-acetylglucosaminidase (NAGLU), found in Homo sapiens (Human).